A 282-amino-acid polypeptide reads, in one-letter code: V-set domain-containing T-cell activation inhibitor 1 (282 aa).

A signal peptide spans 1–24 (MASLGQIIFWSIINVIIILAGAIV). 2 consecutive Ig-like V-type domains span residues 35–144 (HFIT…ANLE) and 153–241 (PEIN…IKVT). Cystine bridges form between cysteine 56-cysteine 130 and cysteine 168-cysteine 225. Asparagine 216 carries an N-linked (GlcNAc...) asparagine glycan. Glycine 257 carries GPI-anchor amidated glycine lipidation. Positions 258 to 282 (PSPCVSSVSAAGWALLSLSCCLMLR) are cleaved as a propeptide — removed in mature form.

Belongs to the immunoglobulin superfamily. BTN/MOG family. Post-translationally, N-glycosylated.

The protein resides in the cell membrane. Negatively regulates T-cell-mediated immune response by inhibiting T-cell activation, proliferation, cytokine production and development of cytotoxicity. When expressed on the cell surface of tumor macrophages, plays an important role, together with regulatory T-cells (Treg), in the suppression of tumor-associated antigen-specific T-cell immunity. Involved in promoting epithelial cell transformation. The chain is V-set domain-containing T-cell activation inhibitor 1 from Rattus norvegicus (Rat).